Reading from the N-terminus, the 498-residue chain is Lycopene beta cyclase, chloroplastic/chromoplastic (498 aa).

The N-terminal 79 residues, 1–79, are a transit peptide targeting the chloroplast and chromoplast; the sequence is MDTLLRTPNN…ELPMYDPSKG (79 aa). 84-112 is an NAD(+) binding site; that stretch reads LAVVGGGPAGLAVAQQVSEAGLSVCSIDP. The FLEET motif motif lies at 293-297; that stretch reads FLEET.

It belongs to the lycopene cyclase family. As to quaternary structure, monomer. The cofactor is FAD. Requires NADPH as cofactor.

The protein resides in the plastid. Its subcellular location is the chloroplast. It localises to the chromoplast. It carries out the reaction a carotenoid psi-end group = a carotenoid beta-end derivative. It catalyses the reaction all-trans-lycopene = gamma-carotene. The enzyme catalyses gamma-carotene = all-trans-beta-carotene. The catalysed reaction is all-trans-neurosporene = beta-zeacarotene. It carries out the reaction beta-zeacarotene = 7,8-dihydro-beta-carotene. The protein operates within carotenoid biosynthesis; beta-carotene biosynthesis. Its pathway is carotenoid biosynthesis; beta-zeacarotene biosynthesis. Functionally, catalyzes the double cyclization reaction which converts lycopene to beta-carotene. Catalyzes the double cyclization reaction which converts neurosporene to 7,8-dihydro-beta-carotene. The sequence is that of Lycopene beta cyclase, chloroplastic/chromoplastic from Capsicum annuum (Capsicum pepper).